We begin with the raw amino-acid sequence, 554 residues long: uncharacterized protein (554 aa).

Asp327 and Asn328 together coordinate Ca(2+).

The protein belongs to the sulfatase family. It depends on Ca(2+) as a cofactor.

It localises to the cytoplasm. The protein localises to the nucleus. This is an uncharacterized protein from Schizosaccharomyces pombe (strain 972 / ATCC 24843) (Fission yeast).